The primary structure comprises 521 residues: Anthranilate synthase component 1 (521 aa).

L-tryptophan contacts are provided by residues Thr40 and 292–294 (PYM). 329 to 330 (GT) lines the chorismate pocket. Glu362 contributes to the Mg(2+) binding site. Chorismate contacts are provided by residues Tyr450, Arg470, 484 to 486 (GAG), and Gly486. Glu499 is a Mg(2+) binding site.

Belongs to the anthranilate synthase component I family. As to quaternary structure, heterotetramer consisting of two non-identical subunits: a beta subunit (TrpG) and a large alpha subunit (TrpE). The cofactor is Mg(2+).

The catalysed reaction is chorismate + L-glutamine = anthranilate + pyruvate + L-glutamate + H(+). It participates in amino-acid biosynthesis; L-tryptophan biosynthesis; L-tryptophan from chorismate: step 1/5. Its activity is regulated as follows. Feedback inhibited by tryptophan. Part of a heterotetrameric complex that catalyzes the two-step biosynthesis of anthranilate, an intermediate in the biosynthesis of L-tryptophan. In the first step, the glutamine-binding beta subunit (TrpG) of anthranilate synthase (AS) provides the glutamine amidotransferase activity which generates ammonia as a substrate that, along with chorismate, is used in the second step, catalyzed by the large alpha subunit of AS (TrpE) to produce anthranilate. In the absence of TrpG, TrpE can synthesize anthranilate directly from chorismate and high concentrations of ammonia. This Buchnera aphidicola subsp. Acyrthosiphon pisum (strain APS) (Acyrthosiphon pisum symbiotic bacterium) protein is Anthranilate synthase component 1 (trpE).